The following is a 107-amino-acid chain: MGGKTVTRADLVEAVYRKVGLSRTESAALVEMILDEVCDAIVNGETVKLSSFATFQVRDKNERIGRNPKTGEEVPILPRRVMTFKASNVLKQRILQEHQKRQGKTSK.

It belongs to the bacterial histone-like protein family. As to quaternary structure, heterodimer of an alpha and a beta chain.

Functionally, this protein is one of the two subunits of integration host factor, a specific DNA-binding protein that functions in genetic recombination as well as in transcriptional and translational control. This chain is Integration host factor subunit alpha, found in Brucella suis (strain ATCC 23445 / NCTC 10510).